The primary structure comprises 386 residues: Manganese dependent endoglucanase Eg5A (386 aa).

Positions 1-17 (MLKYASIALALATLGVA) are cleaved as a signal peptide. Residues 18 to 53 (QQQQWGQCGGIGWTGATTCVAGSVCSVLNPYYSQCI) form the CBM1 domain. Glutamate 209 functions as the Proton donor in the catalytic mechanism. Glutamate 319 functions as the Nucleophile in the catalytic mechanism. Asparagine 324 carries N-linked (GlcNAc...) asparagine glycosylation.

It belongs to the glycosyl hydrolase 5 (cellulase A) family. It depends on Mn(2+) as a cofactor.

Its subcellular location is the secreted. It carries out the reaction Endohydrolysis of (1-&gt;4)-beta-D-glucosidic linkages in cellulose, lichenin and cereal beta-D-glucans.. Secreted manganese dependent endoglucanase that acts by cleaving the beta-1,4-glucose linkage. Exhibits high activity toward carboxymethyl-cellulose (CMC), barley glucan, and glucomannan. Displays low activity on larminarin and xyloglucan but does not hydrolyze hemicellulose substrates such as birchwood xylan, arabinoxylan, and arabinan. This is Manganese dependent endoglucanase Eg5A from Phanerodontia chrysosporium (White-rot fungus).